The primary structure comprises 58 residues: MATVKVTLVKSLIGRLANHKACVKGLGLRRIGHTVEVQDTPENRGMINKAHYLLRVEG.

This sequence belongs to the universal ribosomal protein uL30 family. As to quaternary structure, part of the 50S ribosomal subunit.

The sequence is that of Large ribosomal subunit protein uL30 from Azotobacter vinelandii (strain DJ / ATCC BAA-1303).